The primary structure comprises 212 residues: Pyridoxine/pyridoxamine 5'-phosphate oxidase (212 aa).

The segment at 1-20 is disordered; that stretch reads MSDSAMEPQNPLTSGDFTAA. FMN is bound by residues 59–64, 74–75, Lys81, and Gln103; these read RMVLLK and YT. Lys64 contacts substrate. Residues Tyr121, Arg125, and Ser129 each coordinate substrate. Residues 138–139 and Trp183 each bind FMN; that span reads QS. Residue 189–191 coordinates substrate; that stretch reads RLH. An FMN-binding site is contributed by Arg193.

This sequence belongs to the pyridoxamine 5'-phosphate oxidase family. As to quaternary structure, homodimer. FMN serves as cofactor.

It catalyses the reaction pyridoxamine 5'-phosphate + O2 + H2O = pyridoxal 5'-phosphate + H2O2 + NH4(+). It carries out the reaction pyridoxine 5'-phosphate + O2 = pyridoxal 5'-phosphate + H2O2. Its pathway is cofactor metabolism; pyridoxal 5'-phosphate salvage; pyridoxal 5'-phosphate from pyridoxamine 5'-phosphate: step 1/1. The protein operates within cofactor metabolism; pyridoxal 5'-phosphate salvage; pyridoxal 5'-phosphate from pyridoxine 5'-phosphate: step 1/1. Functionally, catalyzes the oxidation of either pyridoxine 5'-phosphate (PNP) or pyridoxamine 5'-phosphate (PMP) into pyridoxal 5'-phosphate (PLP). The sequence is that of Pyridoxine/pyridoxamine 5'-phosphate oxidase from Azorhizobium caulinodans (strain ATCC 43989 / DSM 5975 / JCM 20966 / LMG 6465 / NBRC 14845 / NCIMB 13405 / ORS 571).